The following is a 245-amino-acid chain: MGCSECCVRCLGGVPYASLIATILCFVGVALFCGCGHEALTGTEKLIELYFSNDFMDYALLVNVIQVFQYIIYGTASFSFLYGVLLLAEGFYTTSAVKALFGEFRTTVCGRCVSATFIFLTYALGVTWMGVFAFSALPVYIYYTMWSTCQMVKYVTENGTGFDDICVDARQYGILPWNASPGKICGLSLAAVCNTSEFELTYHLFIATFAGAAATVIALLTYMMSSTYNYAVLKFLSRDDCCTKF.

A run of 4 helical transmembrane segments spans residues 19–35, 71–87, 117–133, and 204–220; these read LIATILCFVGVALFCGC, IIYGTASFSFLYGVLLL, FIFLTYALGVTWMGVFA, and LFIATFAGAAATVIALL.

Belongs to the myelin proteolipid protein family. In terms of tissue distribution, highly expressed in white matter in myelinating shark brain.

The protein resides in the membrane. The chain is Proteolipid protein DM alpha from Squalus acanthias (Spiny dogfish).